Reading from the N-terminus, the 114-residue chain is Iron-sulfur cluster insertion protein ErpA (114 aa).

Residues C42, C106, and C108 each contribute to the iron-sulfur cluster site.

The protein belongs to the HesB/IscA family. In terms of assembly, homodimer. Iron-sulfur cluster is required as a cofactor.

Its function is as follows. Required for insertion of 4Fe-4S clusters for at least IspG. The sequence is that of Iron-sulfur cluster insertion protein ErpA from Klebsiella pneumoniae subsp. pneumoniae (strain ATCC 700721 / MGH 78578).